We begin with the raw amino-acid sequence, 714 residues long: Lipase maturation factor 2 (714 aa).

A run of 9 helical transmembrane segments spans residues 11–31 (LFLAGLAAAYLAAFVSLYLQI), 79–99 (MELLCLLGAVASMGALLCAPL), 103–125 (LLFAVLRVFYLSLYQVGQVFLYF), 159–179 (SVTFWLVRWLLFRLMFASGVV), 221–241 (FSVVATYVIEIAVPLLFFMPI), 257–277 (ILIILTGNYNFFNALTIVLAF), 304–324 (TLLSFLSTLLELATYALLLYW), 358–378 (VTLPLVGLGFLSLSWEILSAL), and 398–418 (AVFATATVGMFAISLVPFTYI). Residue asparagine 483 is glycosylated (N-linked (GlcNAc...) asparagine). Residues 629–649 (PFSPHVVLWSLYVVAATTCLL) traverse the membrane as a helical segment. Basic residues predominate over residues 654–669 (RRPRGGAPPTRHKAPK). Positions 654 to 714 (RRPRGGAPPT…EGPRGTKRRK (61 aa)) are disordered. Residues 683–708 (RRKEGREAEERGEGRSRGAADGEGPR) are compositionally biased toward basic and acidic residues.

It belongs to the lipase maturation factor family.

It is found in the endoplasmic reticulum membrane. Functionally, involved in the maturation of specific proteins in the endoplasmic reticulum. May be required for maturation and transport of active lipoprotein lipase (LPL) through the secretory pathway. The polypeptide is Lipase maturation factor 2 (LMF2) (Gallus gallus (Chicken)).